Reading from the N-terminus, the 418-residue chain is Deubiquitinase and deneddylase Dub1 (418 aa).

The segment covering 1–10 (MLSPTNSISK) has biased composition (polar residues). Residues 1 to 23 (MLSPTNSISKTAPVPPQDSSKPV) form a disordered region. Residues 40–60 (TALAVLLVVVTLGLILLFYSF) form a helical membrane-spanning segment. The tract at residues 72-144 (TRPSTKEQPT…PLPPKAPKPV (73 aa)) is disordered. Residues 86 to 141 (VPLPSPPLAVPRPSTPPPPVISRPSTPPAPTPAISPPSTPSAPKPSTPPPLPPKAP) are compositionally biased toward pro residues. Catalysis depends on residues H288, D305, and C358.

Belongs to the peptidase C48 family.

The protein resides in the secreted. It is found in the host cell. Its subcellular location is the membrane. In terms of biological role, effector proteins function to alter host cell physiology and promote bacterial survival in host tissues. This protease possesses deubiquitinating and deneddylating activities. The protein is Deubiquitinase and deneddylase Dub1 (cdu1) of Chlamydia trachomatis serovar B (strain Jali20/OT).